A 294-amino-acid chain; its full sequence is Glycine N-acyltransferase-like protein 2 (294 aa).

K19 is modified (N6-acetyllysine).

It belongs to the glycine N-acyltransferase family. Post-translationally, acetylation at Lys-19 drastically decreases the production of N-oleoyl and N-arachidonoyl glycines. Expressed at highest levels in salivary gland and trachea. Also detected in thyroid gland, spinal cord, prostate, lung and fetal brain.

It is found in the endoplasmic reticulum. The catalysed reaction is an acyl-CoA + glycine = an N-acylglycine + CoA + H(+). The enzyme catalyses (9Z)-hexadecenoyl-CoA + glycine = N-(9Z-hexadecenoyl)-glycine + CoA + H(+). It catalyses the reaction octadecanoyl-CoA + glycine = N-octadecanoylglycine + CoA + H(+). It carries out the reaction (5Z,8Z,11Z,14Z)-eicosatetraenoyl-CoA + glycine = N-(5Z,8Z,11Z,14Z)-eicosatetraenoyl-glycine + CoA + H(+). The catalysed reaction is (9Z)-octadecenoyl-CoA + glycine = N-(9Z-octadecenoyl)glycine + CoA + H(+). The enzyme catalyses octanoyl-CoA + glycine = N-octanoylglycine + CoA + H(+). It catalyses the reaction decanoyl-CoA + glycine = N-decanoylglycine + CoA + H(+). It carries out the reaction tetradecanoyl-CoA + glycine = N-tetradecanoylglycine + CoA + H(+). The catalysed reaction is dodecanoyl-CoA + glycine = N-dodecanoylglycine + CoA + H(+). The enzyme catalyses (9Z,12Z)-octadecadienoyl-CoA + glycine = N-(9Z,12Z-octadecadienoyl)-glycine + CoA + H(+). It catalyses the reaction a fatty acyl-CoA + glycine = an N-(fatty acyl)-glycine + CoA + H(+). In terms of biological role, mitochondrial acyltransferase which transfers the acyl group to the N-terminus of glycine. Conjugates numerous substrates, such as arachidonoyl-CoA and saturated medium and long-chain acyl-CoAs ranging from chain-length C8:0-CoA to C18:0-CoA, to form a variety of N-acylglycines. Shows a preference for monounsaturated fatty acid oleoyl-CoA (C18:1-CoA) as an acyl donor. Does not exhibit any activity toward C22:6-CoA and chenodeoxycholoyl-CoA, nor toward serine or alanine. The polypeptide is Glycine N-acyltransferase-like protein 2 (Homo sapiens (Human)).